The chain runs to 179 residues: MKFLFDLFPVILFFAAFKLADIYTATAVAIGATVLQIGWVWFRHRKVEPMQWVSLLIIAVFGGATLVLHNETFIKWKPTVLYWMFAVGLLGSVIGWRKNLIRAMMEKQVTLPDPVWARLNAAWAGFFAAMGVLNLYVAYQFSTEAWVNFKLFGSMGLMLVFIVAQSVWLSRHMPENSQD.

Helical transmembrane passes span 3 to 23 (FLFD…ADIY), 24 to 44 (TATA…WFRH), 49 to 69 (PMQW…LVLH), 76 to 96 (WKPT…VIGW), 121 to 141 (AAWA…AYQF), and 149 to 169 (FKLF…SVWL).

The protein belongs to the YciB family.

The protein localises to the cell inner membrane. In terms of biological role, plays a role in cell envelope biogenesis, maintenance of cell envelope integrity and membrane homeostasis. The protein is Inner membrane-spanning protein YciB of Cupriavidus necator (strain ATCC 17699 / DSM 428 / KCTC 22496 / NCIMB 10442 / H16 / Stanier 337) (Ralstonia eutropha).